A 367-amino-acid chain; its full sequence is Damage-control phosphatase At2g17340 (367 aa).

An N-acetylmethionine modification is found at methionine 1. Aspartate 220, asparagine 221, and aspartate 256 together coordinate Mn(2+). Residues 318 to 322 (EGMGR) carry the Subfamily II EGMGR motif motif.

This sequence belongs to the damage-control phosphatase family. Phosphopantetheine phosphatase II subfamily. Multimer. Requires Mn(2+) as cofactor. It depends on Ni(2+) as a cofactor.

Activity is strongly promoted by Co(2+), Ni(2+), Mg(2+), Cu(2+) and Mn(2+). Activity is inhibited by EDTA. Its function is as follows. Metal-dependent phosphatase with probable damage-control functions. Shows phosphatase activity against several substrates, including sugar phosphates and p-nitrophenyl phosphate(pNPP). Prefers sugar phosphate substrates, including the extremely potent glycating agents ribose-5-phosphate and erythrose-4-phosphate. The chain is Damage-control phosphatase At2g17340 from Arabidopsis thaliana (Mouse-ear cress).